Reading from the N-terminus, the 345-residue chain is Ryncolin-4 (345 aa).

The first 19 residues, 1–19 (MKPWAAFHLIFLVASSLEG), serve as a signal peptide directing secretion. The tract at residues 48–118 (ILQSQPGIPG…DKGDKGEDCN (71 aa)) is disordered. Positions 57–114 (GIPGVPGTNGSEGLKGDPGPQGPPGIRGPDGIRGEAGPKGDKGDQGDKGDKGDKGDKG) constitute a Collagen-like domain. The span at 86-116 (DGIRGEAGPKGDKGDQGDKGDKGDKGDKGED) shows a compositional bias: basic and acidic residues. In terms of domain architecture, Fibrinogen C-terminal spans 121–339 (DCLPTEVRNC…YADMKIRPQK (219 aa)). Intrachain disulfides connect Cys130–Cys158 and Cys282–Cys295.

It belongs to the ficolin lectin family. Veficolin subfamily. Post-translationally, hydroxylated, possibly at Pro-80. As to expression, expressed by the venom duct.

It localises to the secreted. Initiates complement activation and/or interferes in platelet aggregation and/or blood coagulation. This is Ryncolin-4 from Cerberus rynchops (Dog-faced water snake).